The primary structure comprises 160 residues: SsrA-binding protein (160 aa).

Belongs to the SmpB family.

The protein resides in the cytoplasm. In terms of biological role, required for rescue of stalled ribosomes mediated by trans-translation. Binds to transfer-messenger RNA (tmRNA), required for stable association of tmRNA with ribosomes. tmRNA and SmpB together mimic tRNA shape, replacing the anticodon stem-loop with SmpB. tmRNA is encoded by the ssrA gene; the 2 termini fold to resemble tRNA(Ala) and it encodes a 'tag peptide', a short internal open reading frame. During trans-translation Ala-aminoacylated tmRNA acts like a tRNA, entering the A-site of stalled ribosomes, displacing the stalled mRNA. The ribosome then switches to translate the ORF on the tmRNA; the nascent peptide is terminated with the 'tag peptide' encoded by the tmRNA and targeted for degradation. The ribosome is freed to recommence translation, which seems to be the essential function of trans-translation. This Chloroflexus aurantiacus (strain ATCC 29364 / DSM 637 / Y-400-fl) protein is SsrA-binding protein.